Reading from the N-terminus, the 335-residue chain is Tryptophan--tRNA ligase (335 aa).

Residues 13–15 (QPS) and 21–22 (GN) each bind ATP. The 'HIGH' region signature appears at 14 to 22 (PSGELTIGN). Position 138 (D138) interacts with L-tryptophan. ATP-binding positions include 150-152 (GKD), I189, and 198-202 (KMSKS). Positions 198–202 (KMSKS) match the 'KMSKS' region motif.

This sequence belongs to the class-I aminoacyl-tRNA synthetase family. As to quaternary structure, homodimer.

The protein localises to the cytoplasm. It carries out the reaction tRNA(Trp) + L-tryptophan + ATP = L-tryptophyl-tRNA(Trp) + AMP + diphosphate + H(+). Functionally, catalyzes the attachment of tryptophan to tRNA(Trp). This Clostridium acetobutylicum (strain ATCC 824 / DSM 792 / JCM 1419 / IAM 19013 / LMG 5710 / NBRC 13948 / NRRL B-527 / VKM B-1787 / 2291 / W) protein is Tryptophan--tRNA ligase.